The following is a 197-amino-acid chain: Protein-S-isoprenylcysteine O-methyltransferase B (197 aa).

3 consecutive transmembrane segments (helical) span residues 16–36 (MFLA…AIHG), 52–72 (ALAM…FPGL), and 81–101 (FGLT…ITAG). Residues 116–119 (HKLV), Y124, and 129–132 (HPSY) contribute to the S-adenosyl-L-methionine site. A helical membrane pass occupies residues 140–160 (VGTQVMLCNPISAIAFAVVVW). Residue R166 participates in substrate binding. E170 lines the S-adenosyl-L-methionine pocket.

It belongs to the class VI-like SAM-binding methyltransferase superfamily. Isoprenylcysteine carboxyl methyltransferase family. Zn(2+) serves as cofactor. Expressed in flowers, stems, leaves, roots and siliques. Detected in apices and vascular tissues of leaves and roots, in the stigma and in the filaments and anthers of stamen. Not found in petioles or hypocotyls.

Its subcellular location is the endoplasmic reticulum membrane. The enzyme catalyses [protein]-C-terminal S-[(2E,6E)-farnesyl]-L-cysteine + S-adenosyl-L-methionine = [protein]-C-terminal S-[(2E,6E)-farnesyl]-L-cysteine methyl ester + S-adenosyl-L-homocysteine. Its activity is regulated as follows. Inhibited by farnesylthioacetic acid (FTAA) and N-acetyl-S-trans, trans-farnesyl-l-cysteine (AFC). Its function is as follows. Catalyzes the post-translational methylation of isoprenylated C-terminal cysteine residues, resulting in the modulation of the function of prenylated proteins. Involved in negative regulation of abscisic acid signaling. Carboxyl methylation is a reversible and potentially regulated step in the post-translational modification of prenylated proteins. The polypeptide is Protein-S-isoprenylcysteine O-methyltransferase B (Arabidopsis thaliana (Mouse-ear cress)).